We begin with the raw amino-acid sequence, 98 residues long: Feather keratin 2 (98 aa).

Residue Ser2 is modified to N-acetylserine.

Belongs to the avian keratin family. As to quaternary structure, the avian keratins (F-ker, S-ker, C-ker and B-ker) are a complex mixture of very similar polypeptides.

This is Feather keratin 2 from Gallus gallus (Chicken).